The primary structure comprises 166 residues: Phospholipase A2 inhibitor clone 11 (166 aa).

The signal sequence occupies residues 1 to 19 (MRLILLSGLLLLGIFLANG). The C-type lectin domain maps to 46-161 (LKGSFLIVHK…CDDNLLVVCE (116 aa)). Intrachain disulfides connect Cys83/Cys160 and Cys138/Cys152. The N-linked (GlcNAc...) asparagine glycan is linked to Asn122.

This sequence belongs to the alpha-type phospholipase A2 inhibitor family. As to quaternary structure, homotrimer; non-covalently linked. In terms of tissue distribution, expressed by the liver.

It is found in the secreted. This phospholipase A2 inhibitor binds directly phospholipase A2 in the presence or absence of calcium. The polypeptide is Phospholipase A2 inhibitor clone 11 (Bothrops neuwiedi (Neuwied's lancehead)).